The sequence spans 145 residues: Neuromedin-S (145 aa).

Positions 1 to 27 are cleaved as a signal peptide; sequence MRSEKHLPPLPLLLAICCLGTLHPSSG. 2 propeptides span residues 28-89 and 92-117; these read FPQS…HEIY and FLFQFSRTKDPSLKTGESQIATAEYT. N136 is subject to Asparagine amide. Residues 140-145 constitute a propeptide that is removed on maturation; sequence VSINEH.

Belongs to the NmU family. Expressed by the skin glands.

The protein localises to the secreted. Its function is as follows. Stimulates uterine smooth muscle contraction. Synthetic peptide NmS-17 induces calcium mobilization in CHO cells transfected with either human FM-3/GPR66 (EC(50)=0.085 nM) or FM-4/TGR-1 (EC(50)=0.231 nM) NmU/NmS receptors. This chain is Neuromedin-S (nms), found in Bombina orientalis (Oriental fire-bellied toad).